Reading from the N-terminus, the 457-residue chain is G-protein coupled receptor 135 (457 aa).

The segment at 1-27 (MEEQARPPSRPAASATLPGSAHPGGAA) is disordered. The Extracellular segment spans residues 1–64 (MEEQARPPSR…EAAGSRGPAP (64 aa)). N-linked (GlcNAc...) asparagine glycosylation occurs at N47. The helical transmembrane segment at 65–85 (LLWHGAAVAAQALVLLLIFLL) threads the bilayer. Over 86–109 (SSLGNCAVMGVIVKHRQLRTVTNA) the chain is Cytoplasmic. Residues 110–130 (FILSLSLSDLLTALLCLPAAF) form a helical membrane-spanning segment. Residues 131–156 (LDLFAPPGDSGPWRSFCAASRFFSSC) lie on the Extracellular side of the membrane. Residues 157-177 (FGIVSTFSVALISLDRYCAIV) form a helical membrane-spanning segment. Topologically, residues 178–189 (RPPRDKLGRRRA) are cytoplasmic. The helical transmembrane segment at 190-210 (LQLLAGAWLAALGFSLPWELL) threads the bilayer. Over 211 to 235 (RAPREPPTPQSFHRCLYRTSPDPAQ) the chain is Extracellular. The helical transmembrane segment at 236–256 (LGAAYSVGLVVACYLLPFLLM) threads the bilayer. Over 257–295 (CFCRYHICKTVRLSDVRVRPMTTYARVLRFFSEVRTATT) the chain is Cytoplasmic. The chain crosses the membrane as a helical span at residues 296–316 (VLIMIVFVICCWGPYCFLVLL). Over 317-329 (AATRQGQTTQAPS) the chain is Extracellular. Residues 330 to 350 (LLNVAAVWLTWANGAINPVIY) form a helical membrane-spanning segment. Topologically, residues 351–457 (AIRNPNISMF…HKSETRDSSI (107 aa)) are cytoplasmic.

It belongs to the G-protein coupled receptor 1 family. As to quaternary structure, interacts with MTNR1B. Interacts with ARRB1 and ARRB2 in a spontaneous and agonist-independent manner; leading to the internalization of GPR135 in the endosomal compartment.

Its subcellular location is the cell membrane. It is found in the endosome membrane. In terms of biological role, orphan receptor. Has spontaneous activity for beta-arrestin recruitment. Shows a reciprocal regulatory interaction with the melatonin receptor MTNR1B most likely through receptor heteromerization. In Rattus norvegicus (Rat), this protein is G-protein coupled receptor 135 (Gpr135).